We begin with the raw amino-acid sequence, 455 residues long: Notoamide E oxidase notB' (455 aa).

Residues 11–31 (PAILSPADLTVIIVGLGIAGL) traverse the membrane as a helical segment. Positions 48 and 61 each coordinate FAD. Residue Asn75 is glycosylated (N-linked (GlcNAc...) asparagine). Arg121 is a binding site for FAD. Residues Arg199 and Tyr229 contribute to the active site. Positions 324 and 337 each coordinate FAD.

This sequence belongs to the paxM FAD-dependent monooxygenase family. The cofactor is FAD.

It is found in the membrane. The enzyme catalyses notoamide E + NADPH + O2 + H(+) = notoamide C + NADP(+) + H2O. It catalyses the reaction notoamide E + NADPH + O2 + H(+) = notoamide D + NADP(+) + H2O. It functions in the pathway alkaloid biosynthesis. Functionally, FAD-dependent monooxygenase; part of the gene cluster that mediates the biosynthesis of notoamide, a fungal indole alkaloid that belongs to a family of natural products containing a characteristic bicyclo[2.2.2]diazaoctane core. The first step of notoamide biosynthesis involves coupling of L-proline and L-tryptophan by the bimodular NRPS notE', to produce cyclo-L-tryptophan-L-proline called brevianamide F. The reverse prenyltransferase notF' then acts as a deoxybrevianamide E synthase and converts brevianamide F to deoxybrevianamide E via reverse prenylation at C-2 of the indole ring leading to the bicyclo[2.2.2]diazaoctane core. Deoxybrevianamide E is further hydroxylated at C-6 of the indole ring, likely catalyzed by the cytochrome P450 monooxygenase notG', to yield 6-hydroxy-deoxybrevianamide E. 6-hydroxy-deoxybrevianamide E is a specific substrate of the prenyltransferase notC' for normal prenylation at C-7 to produce 6-hydroxy-7-prenyl-deoxybrevianamide, also called notoamide S. As the proposed pivotal branching point in notoamide biosynthesis, notoamide S can be diverted to notoamide E through an oxidative pyran ring closure putatively catalyzed by either notH' cytochrome P450 monooxygenase or the notD' FAD-linked oxidoreductase. This step would be followed by an indole 2,3-epoxidation-initiated pinacol-like rearrangement catalyzed by the notB' FAD-dependent monooxygenase leading to the formation of notoamide C and notoamide D. On the other hand notoamide S is converted to notoamide T by notH' (or notD'), a bifunctional oxidase that also functions as the intramolecular Diels-Alderase responsible for generation of (-)-notoamide T. To generate antipodal (+)-notoaminide T, notH (or notD) in Aspergillus strain MF297-2 is expected to catalyze a Diels-Alder reaction leading to the opposite stereochemistry. The remaining oxidoreductase notD' (or notH') likely catalyzes the oxidative pyran ring formation to yield (-)-stephacidin A. The FAD-dependent monooxygenase notI' is highly similar to notB' and is predicted to catalyze a similar conversion from (-)-stephacidin A to (+)-notoamide B via the 2,3-epoxidation of (-)-stephacidin A followed by a pinacol-type rearrangement. Finally, it remains unclear which enzyme could be responsible for the final hydroxylation steps leading to notoamide A and sclerotiamide. This chain is Notoamide E oxidase notB', found in Aspergillus versicolor.